The sequence spans 296 residues: Heme oxygenase 1 (296 aa).

At 1–273 (METSQPHNAE…RMQADMLTTS (273 aa)) the chain is on the cytoplasmic side. Heme b-binding residues include Lys21, His28, Tyr137, and Arg186. The disordered stretch occupies residues 231 to 264 (GHAVQPKAELRTRSVNKSHENSPAAGKESERTSR). Positions 238–250 (AELRTRSVNKSHE) are enriched in basic and acidic residues. The helical; Anchor for type IV membrane protein transmembrane segment at 274–296 (PLVRWLLALGFIATTVAVGLFAM) threads the bilayer.

The protein belongs to the heme oxygenase family. As to quaternary structure, homodimer and higher order homooligomer. Oligomerization is crucial for its stability and function in the endoplasmic reticulum. A soluble form arises by proteolytic removal of the membrane anchor.

The protein resides in the endoplasmic reticulum membrane. The enzyme catalyses heme b + 3 reduced [NADPH--hemoprotein reductase] + 3 O2 = biliverdin IXalpha + CO + Fe(2+) + 3 oxidized [NADPH--hemoprotein reductase] + 3 H2O + H(+). With respect to regulation, inhibited by metalloporphyrins in the following order of decreasing potency: tin mesoporphyrin &gt; tin protoporphyrin &gt; zinc protoporphyrin &gt; manganese protoporphyrin &gt; cobalt protoporphyrin. Functionally, catalyzes the oxidative cleavage of heme at the alpha-methene bridge carbon, released as carbon monoxide (CO), to generate biliverdin IXalpha, while releasing the central heme iron chelate as ferrous iron. Affords protection against programmed cell death and this cytoprotective effect relies on its ability to catabolize free heme and prevent it from sensitizing cells to undergo apoptosis. Catalyzes the oxidative cleavage of heme at the alpha-methene bridge carbon, released as carbon monoxide (CO), to generate biliverdin IXalpha, while releasing the central heme iron chelate as ferrous iron. This Gallus gallus (Chicken) protein is Heme oxygenase 1 (HMOX1).